Reading from the N-terminus, the 71-residue chain is UPF0346 protein SP70585_0986 (71 aa).

This sequence belongs to the UPF0346 family.

The sequence is that of UPF0346 protein SP70585_0986 from Streptococcus pneumoniae (strain 70585).